A 216-amino-acid chain; its full sequence is MNFPIFALFSFVSGSIPFGYWIALRFAGVDIRKLGSKNIGATNVGRLIGWKFGFIVLALDITKGMLPVYLSSVYVPEGGIPFQLLCGVCAVLGHMFSPFLGFRGGKGVATTFGVFLVLTPIACLGAVLVFWVVYKFFKFVSLGSIFASITLPLVYAFSTILLLHEEVSYWVLGTMVFISFGIILTHRENIIRILNRSELFAVKGEEQDGDSERNRR.

Helical transmembrane passes span 3–23 (FPIF…YWIA), 48–68 (IGWK…MLPV), 82–102 (FQLL…FLGF), 112–132 (FGVF…VFWV), 142–162 (LGSI…TILL), and 166–186 (EVSY…ILTH).

Belongs to the PlsY family. In terms of assembly, probably interacts with PlsX.

It is found in the cell inner membrane. The enzyme catalyses an acyl phosphate + sn-glycerol 3-phosphate = a 1-acyl-sn-glycero-3-phosphate + phosphate. Its pathway is lipid metabolism; phospholipid metabolism. Functionally, catalyzes the transfer of an acyl group from acyl-phosphate (acyl-PO(4)) to glycerol-3-phosphate (G3P) to form lysophosphatidic acid (LPA). This enzyme utilizes acyl-phosphate as fatty acyl donor, but not acyl-CoA or acyl-ACP. In Leptospira interrogans serogroup Icterohaemorrhagiae serovar Lai (strain 56601), this protein is Glycerol-3-phosphate acyltransferase.